Consider the following 826-residue polypeptide: Hyaluronate lyase HylA (826 aa).

The segment at residues 1-36 (MFDIPYQVPSRRTFLSLSALSAIAIAASPEMPDAFA) is a signal peptide (tat-type signal). Active-site residues include H276, Y285, and R339. Residues 800-826 (LSPALPKPTKPSLRASSYPLGLPHTSS) form a disordered region.

This sequence belongs to the polysaccharide lyase 8 family. Predicted to be exported by the Tat system. The position of the signal peptide cleavage has not been experimentally proven.

The protein resides in the secreted. The catalysed reaction is [hyaluronan](n) = n 3-(4-deoxy-beta-D-gluc-4-enuronosyl)-N-acetyl-D-glucosamine + H2O. In terms of biological role, degrades hyaluronic acid (HA) into large-sized HA oligosaccharides, including tetrasaccharide HA (HA-4), hexasaccharide HA (HA-6) and higher molecular weight HA, and to a lesser extent into HA disaccharides (HA-2). Involved in the pathogenesis of acne. HA degradation products induce secretion of proinflammatory cytokines (IL-6, IL-8 and TNF-alpha) from human HaCaT keratinocyte cell line and from mouse bone marrow derived macrophages (BMDMs). Produced HA fragments also direct robust TLR2-dependent inflammation in the mouse model of acne. In Cutibacterium acnes (Propionibacterium acnes), this protein is Hyaluronate lyase HylA.